The sequence spans 485 residues: Cytolytic protein enterolobin (485 aa).

Cystine bridges form between C34-C98 and C183-C189.

It belongs to the aerolysin family. As to quaternary structure, oligomerizes as a hexamer. The N-terminus is blocked.

Its function is as follows. Cytolytic protein with insecticidal activity. Acts as a pro-inflammatory agent. This is Cytolytic protein enterolobin from Enterolobium contortisiliquum (Pacara earpod tree).